The chain runs to 462 residues: GTPase Der (462 aa).

2 EngA-type G domains span residues 2–164 (QKVI…EEKV) and 198–369 (IRVG…KNYT). GTP contacts are provided by residues 8–15 (GKPNVGKS), 55–59 (DSGGL), 116–119 (NKID), 204–211 (GRVNVGKS), 251–255 (DTAGI), and 315–318 (NKWD). The KH-like domain occupies 370-454 (QKIQTSKLNE…PIVLIPKKRG (85 aa)).

The protein belongs to the TRAFAC class TrmE-Era-EngA-EngB-Septin-like GTPase superfamily. EngA (Der) GTPase family. In terms of assembly, associates with the 50S ribosomal subunit.

GTPase that plays an essential role in the late steps of ribosome biogenesis. This chain is GTPase Der, found in Campylobacter concisus (strain 13826).